Reading from the N-terminus, the 217-residue chain is Hypersensitivity response secretion protein HrcR (217 aa).

Transmembrane regions (helical) follow at residues 6–26 (FASLIVMAVAIALLPFAAMVV), 52–72 (MVLNGIAMIVSCFVMAPVGME), 158–178 (IGFLLYLAFIVIDLVIANLLM), and 190–210 (VAIPFKLLLFVVMDGWSVLIH).

Belongs to the FliP/MopC/SpaP family.

The protein localises to the cell membrane. In terms of biological role, involved in the secretion of PopA, a proteinaceous elicitor of the hypersensitivity response in plants. The chain is Hypersensitivity response secretion protein HrcR (hrcR) from Ralstonia nicotianae (strain ATCC BAA-1114 / GMI1000) (Ralstonia solanacearum).